The chain runs to 842 residues: MTWTHLPLGNKTSRFTQSALALMIAGTLPAYAGTFNPRFLEDVPGIDQHVDLSMYESNKAEHLPGKYRVSVVVNEKKMESRTLEFKAATEAQRAKMGESLVPCLSRVQLEDMGVRIDSFPALKMAPPEACVAFDDIIPQAASHFDFADQTLIMSFPQAAMKQTARGTVPESQWDEGVNALLVDYNFSGSNASYDAHDSETSYNSDSYYLNLRSGMNLGAWRLRNYSTWTRNDGNNTWDNIGTSLSRAIVPLKSQLTLGDTSTAGDIFDSVQMRGVQLTSDEEMLPDSQRGFAPVIRGIAKSNAEVTVEQNNYVIYRTFVQPGAFEINDLYPTSNSGDLTVTIKESDGSEQKFVQPFSSVALLQREGHLKYSLSAGEYRAGNYNSAEPKFGQLDAMYGLPYGFTVYGGAIFSDDYYSLAGGLGKNFGYIGAISIDVTQAKSKLANEENSEGQSYRFLYSKSFNSGTDFRLLGYKYSTSGYYTFQEATDVRSDADSSYSQYHKRSQIQGNVTQQLGAWGSVYFNVTQQDYWNDEGKQRSLNAGYNGRIGRVNYSVAYTWTKSPEWDESDRLLSFSMSIPLGRVWSNYHLTTDQHGRTNQQLGVSGTALEDHNLNYSVQEGYGSNGVGNSGSVNLDYQGGVGSASLGYNYNRDGQQVNYGLRGGVIAHSEGITLSQPLGESMAIISAPGARGAHVINNGGVEVDWMGNAVVPYLTPYRETEVSLRSDSLNNQVDLDTASVNVVPTRGAIVRARFDTRVGYRVLMNLTQANGKAVPFGATATLLDTTKESSSIVGEDGQLYISGMPEKGALQVNWGKDQAQQCRVAFTLPEQQDNTGVVMANAVCR.

An N-terminal signal peptide occupies residues 1–21; that stretch reads MTWTHLPLGNKTSRFTQSALA. An intrachain disulfide couples Cys819 to Cys841.

It belongs to the fimbrial export usher family.

The protein localises to the cell outer membrane. Its function is as follows. Involved in the export and assembly of LpfA fimbrial subunits across the outer membrane. This Salmonella typhimurium (strain LT2 / SGSC1412 / ATCC 700720) protein is Outer membrane usher protein LpfC (lpfC).